Consider the following 688-residue polypeptide: DNA-directed RNA polymerase subunit beta' (688 aa).

4 residues coordinate Zn(2+): Cys-69, Cys-71, Cys-87, and Cys-90. Asp-493, Asp-495, and Asp-497 together coordinate Mg(2+).

Belongs to the RNA polymerase beta' chain family. RpoC1 subfamily. In plastids the minimal PEP RNA polymerase catalytic core is composed of four subunits: alpha, beta, beta', and beta''. When a (nuclear-encoded) sigma factor is associated with the core the holoenzyme is formed, which can initiate transcription. It depends on Mg(2+) as a cofactor. Zn(2+) serves as cofactor.

The protein resides in the plastid. Its subcellular location is the chloroplast. It carries out the reaction RNA(n) + a ribonucleoside 5'-triphosphate = RNA(n+1) + diphosphate. Functionally, DNA-dependent RNA polymerase catalyzes the transcription of DNA into RNA using the four ribonucleoside triphosphates as substrates. The polypeptide is DNA-directed RNA polymerase subunit beta' (Chloranthus spicatus (Chulantree)).